A 280-amino-acid polypeptide reads, in one-letter code: Hematopoietically-expressed homeobox protein HHEX homolog (280 aa).

2 disordered regions span residues 1–35 and 221–280; these read MSTLQYPGPPPPSSMNLHNPHMNHHHGLVGPGLAP and RRVK…EKEA. The segment at residues 165–224 is a DNA-binding region (homeobox); that stretch reads RKGGQVRFSNDQTMELEKKFESQKYLSPPERKKLAKLLQLSERQVKTWFQNRRAKWRRVK. A compositionally biased stretch (basic and acidic residues) spans 232–252; sequence GEGDENSHEKPRDLDRDDFSR.

The protein localises to the nucleus. In terms of biological role, transcription factor that may play a central role in activating or maintaining gene expression in the vegetal pole. Part of a gene regulatory circuit with Erg and Tgif that operates early in mesoderm development. This chain is Hematopoietically-expressed homeobox protein HHEX homolog, found in Patiria miniata (Bat star).